We begin with the raw amino-acid sequence, 388 residues long: Nitric oxide reductase FlRd-NAD(+) reductase (388 aa).

This sequence belongs to the FAD-dependent oxidoreductase family. It depends on FAD as a cofactor.

It localises to the cytoplasm. The catalysed reaction is 2 reduced [nitric oxide reductase rubredoxin domain] + NAD(+) + H(+) = 2 oxidized [nitric oxide reductase rubredoxin domain] + NADH. Its pathway is nitrogen metabolism; nitric oxide reduction. Its function is as follows. One of at least two accessory proteins for anaerobic nitric oxide (NO) reductase. Reduces the rubredoxin moiety of NO reductase. The polypeptide is Nitric oxide reductase FlRd-NAD(+) reductase (Aeromonas hydrophila subsp. hydrophila (strain ATCC 7966 / DSM 30187 / BCRC 13018 / CCUG 14551 / JCM 1027 / KCTC 2358 / NCIMB 9240 / NCTC 8049)).